The sequence spans 394 residues: GTPase Era, mitochondrial (394 aa).

One can recognise an Era-type G domain in the interval 32-280 (KCLQLAVIGA…RDHLMSISPQ (249 aa)). The tract at residues 40–47 (GAPNVGKS) is G1. Residue 40–47 (GAPNVGKS) participates in GTP binding. Positions 66–70 (DTTTR) are G2. A G3 region spans residues 87-90 (DSPG). Residues 87–91 (DSPGA) and 160–163 (NKID) each bind GTP. Residues 160 to 163 (NKID) form a G4 region. The G5 stretch occupies residues 259–261 (VSS).

It belongs to the TRAFAC class TrmE-Era-EngA-EngB-Septin-like GTPase superfamily. Era GTPase family.

The protein localises to the mitochondrion matrix. It localises to the mitochondrion inner membrane. Its function is as follows. Probable GTPase that plays a role in the mitochondrial ribosomal small subunit assembly. Specifically binds the 12S mitochondrial rRNA (12S mt-rRNA) to a 33 nucleotide section delineating the 3' terminal stem-loop region. May act as a chaperone that protects the 12S mt-rRNA on the 28S mitoribosomal subunit during ribosomal small subunit assembly. May play a role in positively regulating mitochondrial function. Plays a role in fertility. This Caenorhabditis elegans protein is GTPase Era, mitochondrial.